Here is a 103-residue protein sequence, read N- to C-terminus: UPF0145 protein EF_0241 (103 aa).

It belongs to the UPF0145 family.

The protein is UPF0145 protein EF_0241 of Enterococcus faecalis (strain ATCC 700802 / V583).